We begin with the raw amino-acid sequence, 113 residues long: Nucleoid-associated protein RHA1_ro04210 (113 aa).

The protein belongs to the YbaB/EbfC family. As to quaternary structure, homodimer.

The protein localises to the cytoplasm. It is found in the nucleoid. Its function is as follows. Binds to DNA and alters its conformation. May be involved in regulation of gene expression, nucleoid organization and DNA protection. This Rhodococcus jostii (strain RHA1) protein is Nucleoid-associated protein RHA1_ro04210.